A 700-amino-acid polypeptide reads, in one-letter code: MNNNKGGFLRSSVFYIFIFLAVVGMVYGLFGNDKTTTKTITSSEFIKALNDKELKSVTVQPGNSIYNVTGTYKKAQTATKDKGLSLFQPTQKVTKFTSTLLPNDASLKSVTDAATKTKTELVTKQAENSGFWLNLLVSLVPVLLIVAVFYLMMNQAGGGKGGQGGMMSFGKSKAKPSDPKDNKVRFADVAGAEEEKQELVEVVEFLKAPKKFVNLGARIPKGVLLEGPPGTGKTLLAKAVAGEASVPFFSMSGSDFVEMFVGVGASRVRDLFENAKKSAPAIIFIDEIDAVGRRRGTGMGGGNDEREQTLNQILIEMDGFEGSEGVIILASTNRSDVLDPALLRSGRFDRKILVGAPDVKGREAILNVHAKNKPLADNVDLKAIAQQTPGYVGADLENLLNEAALLAARRNKSKVDAADIDEAEDRIFQGPAKTNHNMSESERRTTAYHEAGHALVGLVRSEASVVRKVTIVPRGRIGGYALMTPKNDRYNLKYSEAKEQLAGLMGGRASEIFMFNEASSGASNDFQQATGLARQMVTAFGMSDKLGMVQLEGNASVGYADQAGNRAYSEETARLIDEEVRRLAREAFDDAIAILRDNKDKLTAIAEALLEVETLDEKQIKDIYLTGTFTRKDIQDDTELAKAKSFEEAKAAADAKDSQAEQRFEKQDEEKSSDDHSESKNEDTDSTDKSETDDNNTENK.

The Cytoplasmic segment spans residues 1–10 (MNNNKGGFLR). The helical transmembrane segment at 11-31 (SSVFYIFIFLAVVGMVYGLFG) threads the bilayer. Residues 32–130 (NDKTTTKTIT…LVTKQAENSG (99 aa)) lie on the Extracellular side of the membrane. The helical transmembrane segment at 131–151 (FWLNLLVSLVPVLLIVAVFYL) threads the bilayer. The Cytoplasmic segment spans residues 152–700 (MMNQAGGGKG…ETDDNNTENK (549 aa)). 227–234 (GPPGTGKT) provides a ligand contact to ATP. H449 contacts Zn(2+). E450 is an active-site residue. Zn(2+) contacts are provided by H453 and D525. Positions 644-700 (KSFEEAKAAADAKDSQAEQRFEKQDEEKSSDDHSESKNEDTDSTDKSETDDNNTENK) are disordered.

The protein in the central section; belongs to the AAA ATPase family. In the C-terminal section; belongs to the peptidase M41 family. Homohexamer. The cofactor is Zn(2+).

It is found in the cell membrane. Acts as a processive, ATP-dependent zinc metallopeptidase for both cytoplasmic and membrane proteins. Plays a role in the quality control of integral membrane proteins. In Leuconostoc mesenteroides subsp. mesenteroides (strain ATCC 8293 / DSM 20343 / BCRC 11652 / CCM 1803 / JCM 6124 / NCDO 523 / NBRC 100496 / NCIMB 8023 / NCTC 12954 / NRRL B-1118 / 37Y), this protein is ATP-dependent zinc metalloprotease FtsH.